Here is a 323-residue protein sequence, read N- to C-terminus: Probable oxidoreductase patJ (323 aa).

The segment at 291–323 is disordered; it reads DQSANGVNGHATGVEAKKKQLGDMTRRRSGAQE. Residues 305-316 show a composition bias toward basic and acidic residues; that stretch reads EAKKKQLGDMTR.

It belongs to the oxidoreductase OpS7 family.

Its subcellular location is the vacuole lumen. It localises to the cytoplasmic vesicle lumen. It participates in mycotoxin biosynthesis; patulin biosynthesis. Functionally, probable oxidoreductase; part of the gene cluster that mediates the biosynthesis of patulin, an acetate-derived tetraketide mycotoxin produced by several fungal species that shows antimicrobial properties against several bacteria. PatJ acts with patO in the vacuole to convert gentisyl alcohol to isoepoxydon. The pathway begins with the synthesis of 6-methylsalicylic acid by the polyketide synthase (PKS) patK via condensation of acetate and malonate units. The 6-methylsalicylic acid decarboxylase patG then catalyzes the decarboxylation of 6-methylsalicylic acid to yield m-cresol (also known as 3-methylphenol). These first reactions occur in the cytosol. The intermediate m-cresol is then transported into the endoplasmic reticulum where the cytochrome P450 monooxygenase patH converts it to m-hydroxybenzyl alcohol, which is further converted to gentisyl alcohol by the cytochrome P450 monooxygenase patI. The oxidoreductases patJ and patO further convert gentisyl alcohol to isoepoxydon in the vacuole. PatN catalyzes then the transformation of isoepoxydon into phyllostine. The cluster protein patF is responsible for the conversion from phyllostine to neopatulin whereas the alcohol dehydrogenase patD converts neopatulin to E-ascladiol. The steps between isoepoxydon and E-ascladiol occur in the cytosol, and E-ascladiol is probably secreted to the extracellular space by one of the cluster-specific transporters patC or patM. Finally, the secreted patulin synthase patE catalyzes the conversion of E-ascladiol to patulin. This Aspergillus clavatus (strain ATCC 1007 / CBS 513.65 / DSM 816 / NCTC 3887 / NRRL 1 / QM 1276 / 107) protein is Probable oxidoreductase patJ.